Consider the following 34-residue polypeptide: uncharacterized protein (34 aa).

Residues 10 to 30 (LIITSSFFAIAAVLVLSVLLI) form a helical membrane-spanning segment.

Its subcellular location is the membrane. This is an uncharacterized protein from Escherichia coli O6:H1 (strain CFT073 / ATCC 700928 / UPEC).